A 647-amino-acid polypeptide reads, in one-letter code: Carboxypeptidase Z (647 aa).

The N-terminal stretch at 1-18 (MVPSLLLLLTGLFRATEP) is a signal peptide. Residues 35-157 (AQKAKCVDIS…AGEEEGCFDP (123 aa)) form the FZ domain. 5 disulfide bridges follow: Cys40–Cys106, Cys48–Cys99, Cys90–Cys126, Cys115–Cys154, and Cys119–Cys143. One can recognise a Peptidase M14 domain in the interval 183-499 (KHHSYSQMVS…DALLNYMEMV (317 aa)). His245 and Glu248 together coordinate Zn(2+). An N-linked (GlcNAc...) asparagine glycan is attached at Asn278. Position 377 (His377) interacts with Zn(2+). Catalysis depends on Glu469, which acts as the Proton donor/acceptor.

It belongs to the peptidase M14 family. As to quaternary structure, interacts with WNT4 vie its FZ domain. It depends on Zn(2+) as a cofactor. In the early embryo it is initially expressed throughout the somites and subsequently becomes restricted to the sclerotome. Expressed in somites, paraxial head mesoderm and apical ectodermal ridge.

The protein resides in the secreted. The protein localises to the extracellular space. It localises to the extracellular matrix. With respect to regulation, inhibited by 2-mercaptomethyl-3-guanidinoethylthiopropanoic acid (MGTA) and guanidinoethylmercaptosuccinic acid (GEMSA). Inhibited by chelating agents such as EDTA and EGTA. Cleaves substrates with C-terminal arginine residues. Modulates the Wnt signaling pathway, probably by cleaving some undefined protein. Regulates the development of skeletal elements during development, probably by activating WNT4. In Gallus gallus (Chicken), this protein is Carboxypeptidase Z (CPZ).